A 565-amino-acid polypeptide reads, in one-letter code: Periplasmic trehalase (565 aa).

Positions 1–30 (MKSPAPSRPQKMALIPACIFLCFAALSVQA) are cleaved as a signal peptide. Substrate is bound by residues R152, 159–160 (WD), N196, 205–207 (RSQ), 277–279 (RPE), and G310. Residues D312 and E496 each act as proton donor/acceptor in the active site. Substrate is bound at residue E511. The segment at 538 to 565 (PCDNVPATRPTVKSATTQPSTKEAQPTP) is disordered. A compositionally biased stretch (polar residues) spans 548–565 (TVKSATTQPSTKEAQPTP).

The protein belongs to the glycosyl hydrolase 37 family. Monomer.

The protein resides in the periplasm. It catalyses the reaction alpha,alpha-trehalose + H2O = alpha-D-glucose + beta-D-glucose. Functionally, provides the cells with the ability to utilize trehalose at high osmolarity by splitting it into glucose molecules that can subsequently be taken up by the phosphotransferase-mediated uptake system. This is Periplasmic trehalase from Escherichia coli O139:H28 (strain E24377A / ETEC).